Consider the following 172-residue polypeptide: Protein PLASTID REDOX INSENSITIVE 2, chloroplastic (172 aa).

The N-terminal 54 residues, Met1–Arg54, are a transit peptide targeting the chloroplast.

It is found in the plastid. The protein localises to the chloroplast stroma. It localises to the chloroplast nucleoid. Its function is as follows. Required for the activity of the plastid-encoded RNA polymerase (PEP) and full expression of genes transcribed by PEP. This chain is Protein PLASTID REDOX INSENSITIVE 2, chloroplastic, found in Oryza sativa subsp. japonica (Rice).